A 101-amino-acid polypeptide reads, in one-letter code: Co-chaperonin GroES (101 aa).

Belongs to the GroES chaperonin family. As to quaternary structure, heptamer of 7 subunits arranged in a ring. Interacts with the chaperonin GroEL.

It localises to the cytoplasm. Together with the chaperonin GroEL, plays an essential role in assisting protein folding. The GroEL-GroES system forms a nano-cage that allows encapsulation of the non-native substrate proteins and provides a physical environment optimized to promote and accelerate protein folding. GroES binds to the apical surface of the GroEL ring, thereby capping the opening of the GroEL channel. This Lawsonia intracellularis protein is Co-chaperonin GroES.